The primary structure comprises 159 residues: Transcriptional repressor NrdR (159 aa).

The segment at 3–34 is a zinc-finger region; the sequence is CPFCRHEDTQVVDSRVSEDGAAIRRRRRCSAC. In terms of domain architecture, ATP-cone spans 49 to 139; it reads PAVVKKDGSR…VYRRFEDVSE (91 aa).

It belongs to the NrdR family. Requires Zn(2+) as cofactor.

In terms of biological role, negatively regulates transcription of bacterial ribonucleotide reductase nrd genes and operons by binding to NrdR-boxes. This chain is Transcriptional repressor NrdR, found in Burkholderia ambifaria (strain MC40-6).